A 256-amino-acid polypeptide reads, in one-letter code: Large ribosomal subunit protein bL21c (256 aa).

The N-terminal 55 residues, 1 to 55, are a transit peptide targeting the chloroplast; it reads MASATLAFSCSSLCATLKLPQNLNPLLLNVPPLSKPFSGVVSPPSLSRLSLLPVA.

As to quaternary structure, component of the chloroplast large ribosomal subunit (LSU). Mature 70S chloroplast ribosomes of higher plants consist of a small (30S) and a large (50S) subunit. The 30S small subunit contains 1 molecule of ribosomal RNA (16S rRNA) and 24 different proteins. The 50S large subunit contains 3 rRNA molecules (23S, 5S and 4.5S rRNA) and 33 different proteins.

It localises to the plastid. Its subcellular location is the chloroplast. Component of the chloroplast ribosome (chloro-ribosome), a dedicated translation machinery responsible for the synthesis of chloroplast genome-encoded proteins, including proteins of the transcription and translation machinery and components of the photosynthetic apparatus. The protein is Large ribosomal subunit protein bL21c (RPL21) of Spinacia oleracea (Spinach).